Reading from the N-terminus, the 317-residue chain is Apolipoprotein E (317 aa).

Positions 1-18 (MKVLWAALLVTFLAGCQA) are cleaved as a signal peptide. 8 tandem repeats follow at residues 80–101 (TLMDETMKELKAYKSELEEQLS), 102–123 (PVAEETRARLSKELQAAQARLG), 124–145 (ADMEDVRSRLVQYRSEVQAMLG), 146–167 (QSTEELRARLASHLRKLRKRLL), 168–189 (RDADDLQKRLAVYQAGAREGAE), 190–211 (RGVSAIRERLGPLVEQGRVRAA), 212–233 (TVGSLASQPLQERAQALGERLR), and 234–255 (ARMEEMGSRTRDRLDEVKEQVA). The interval 80–255 (TLMDETMKEL…RLDEVKEQVA (176 aa)) is 8 X 22 AA approximate tandem repeats. At Met-143 the chain carries Methionine sulfoxide. Ser-147 carries the post-translational modification Phosphoserine. The LDL and other lipoprotein receptors binding stretch occupies residues 158 to 168 (HLRKLRKRLLR). 162 to 165 (LRKR) lines the heparin pocket. Positions 210–290 (AATVGSLASQ…SWFEPLVEDM (81 aa)) are lipid-binding and lipoprotein association. An O-linked (GalNAc...) threonine glycan is attached at Thr-212. Residue 229–236 (GERLRARM) participates in heparin binding. The interval 266–317 (QQISLQAEAFQARLKSWFEPLVEDMQRQWAGLVEKVQAAVGASTAPVPSDNH) is homooligomerization. A specificity for association with VLDL region spans residues 278–290 (RLKSWFEPLVEDM).

The protein belongs to the apolipoprotein A1/A4/E family. Homotetramer. May interact with ABCA1; functionally associated with ABCA1 in the biogenesis of HDLs. May interact with APP/A4 amyloid-beta peptide; the interaction is extremely stable in vitro but its physiological significance is unclear. May interact with MAPT. May interact with MAP2. In the cerebrospinal fluid, interacts with secreted SORL1. Interacts with PMEL; this allows the loading of PMEL luminal fragment on ILVs to induce fibril nucleation. Post-translationally, APOE exists as multiple glycosylated and sialylated glycoforms within cells and in plasma. The extent of glycosylation and sialylation are tissue and context specific. Glycated in plasma VLDL. In terms of processing, phosphorylated by FAM20C in the extracellular medium.

It is found in the secreted. It localises to the extracellular space. Its subcellular location is the extracellular matrix. The protein localises to the extracellular vesicle. The protein resides in the endosome. It is found in the multivesicular body. Its function is as follows. APOE is an apolipoprotein, a protein associating with lipid particles, that mainly functions in lipoprotein-mediated lipid transport between organs via the plasma and interstitial fluids. APOE is a core component of plasma lipoproteins and is involved in their production, conversion and clearance. Apolipoproteins are amphipathic molecules that interact both with lipids of the lipoprotein particle core and the aqueous environment of the plasma. As such, APOE associates with chylomicrons, chylomicron remnants, very low density lipoproteins (VLDL) and intermediate density lipoproteins (IDL) but shows a preferential binding to high-density lipoproteins (HDL). It also binds a wide range of cellular receptors including the LDL receptor/LDLR, the LDL receptor-related proteins LRP1, LRP2 and LRP8 and the very low-density lipoprotein receptor/VLDLR that mediate the cellular uptake of the APOE-containing lipoprotein particles. Finally, APOE also has a heparin-binding activity and binds heparan-sulfate proteoglycans on the surface of cells, a property that supports the capture and the receptor-mediated uptake of APOE-containing lipoproteins by cells. A main function of APOE is to mediate lipoprotein clearance through the uptake of chylomicrons, VLDLs, and HDLs by hepatocytes. APOE is also involved in the biosynthesis by the liver of VLDLs as well as their uptake by peripheral tissues ensuring the delivery of triglycerides and energy storage in muscle, heart and adipose tissues. By participating in the lipoprotein-mediated distribution of lipids among tissues, APOE plays a critical role in plasma and tissues lipid homeostasis. APOE is also involved in two steps of reverse cholesterol transport, the HDLs-mediated transport of cholesterol from peripheral tissues to the liver, and thereby plays an important role in cholesterol homeostasis. First, it is functionally associated with ABCA1 in the biogenesis of HDLs in tissues. Second, it is enriched in circulating HDLs and mediates their uptake by hepatocytes. APOE also plays an important role in lipid transport in the central nervous system, regulating neuron survival and sprouting. This Macaca nemestrina (Pig-tailed macaque) protein is Apolipoprotein E (APOE).